The chain runs to 689 residues: FACT complex subunit ssrp1-B (689 aa).

2 disordered regions span residues 434–565 (DNKS…KRAT) and 592–689 (KAGA…GESD). Acidic residues predominate over residues 461–477 (EQDDDSDDESTDEDYDL). 4 stretches are compositionally biased toward basic and acidic residues: residues 478 to 491 (DKDM…KDSS), 523 to 532 (IEPKKKESKE), 538 to 563 (EKKE…EPKR), and 601 to 628 (SADD…EYKK). The HMG box DNA-binding region spans 561–627 (PKRATTAYII…RYEAEMKEYK (67 aa)). Residues 638-650 (GPSTKKSSDQSPG) show a composition bias toward polar residues.

The protein belongs to the SSRP1 family. Component of the FACT complex, a stable heterodimer of hmg-3 and spt-16. The FACT complex may also include hmg-4 instead of hmg-3. As to expression, expressed in the germline.

Its subcellular location is the nucleus. It is found in the chromosome. In terms of biological role, component of the FACT complex, a general chromatin factor that acts to reorganize nucleosomes. The FACT complex is involved in multiple processes that require DNA as a template such as mRNA elongation, DNA replication and DNA repair. During transcription elongation the FACT complex acts as a histone chaperone that both destabilizes and restores nucleosomal structure. It facilitates the passage of RNA polymerase II and transcription by promoting the dissociation of one histone H2A-H2B dimer from the nucleosome, then subsequently promotes the reestablishment of the nucleosome following the passage of RNA polymerase II. Binds specifically to double-stranded DNA. In embryos, may function redundantly with hmg-4 to promote cell cycle progression and development of the anterior pharynx. In the germline, acts non-redundantly with hmg-4 to play a role in oocyte development. The polypeptide is FACT complex subunit ssrp1-B (Caenorhabditis elegans).